We begin with the raw amino-acid sequence, 492 residues long: 3-octaprenyl-4-hydroxybenzoate carboxy-lyase (492 aa).

Asn-177 contributes to the Mn(2+) binding site. Prenylated FMN contacts are provided by residues 180–182 (IYR), 194–196 (RWL), and 199–200 (RG). Glu-243 lines the Mn(2+) pocket. The Proton donor role is filled by Asp-292.

This sequence belongs to the UbiD family. As to quaternary structure, homohexamer. Prenylated FMN is required as a cofactor. It depends on Mn(2+) as a cofactor.

The protein resides in the cell membrane. It carries out the reaction a 4-hydroxy-3-(all-trans-polyprenyl)benzoate + H(+) = a 2-(all-trans-polyprenyl)phenol + CO2. Its pathway is cofactor biosynthesis; ubiquinone biosynthesis. In terms of biological role, catalyzes the decarboxylation of 3-octaprenyl-4-hydroxy benzoate to 2-octaprenylphenol, an intermediate step in ubiquinone biosynthesis. The polypeptide is 3-octaprenyl-4-hydroxybenzoate carboxy-lyase (Neisseria gonorrhoeae (strain ATCC 700825 / FA 1090)).